The following is a 236-amino-acid chain: Ribosome maturation protein SDO1 homolog (236 aa).

Belongs to the SDO1/SBDS family.

This Pyrococcus abyssi (strain GE5 / Orsay) protein is Ribosome maturation protein SDO1 homolog.